Reading from the N-terminus, the 106-residue chain is uncharacterized protein (106 aa).

At 1–6 the chain is on the cytoplasmic side; it reads MYQTSP. A helical membrane pass occupies residues 7–27; that stretch reads LSLFYFQVLVPKFLECFLCFP. At 28 to 32 the chain is on the extracellular side; it reads YHKIS. Residues 33-53 form a helical membrane-spanning segment; that stretch reads LVALLSFFYCQLQTNMIILLS. Over 54 to 73 the chain is Cytoplasmic; the sequence is QIKRFLYRQIMIALKIKAKK. The helical transmembrane segment at 74–94 threads the bilayer; sequence FWFIFKYFNVSCDARLFNELF. Residues 95 to 106 are Extracellular-facing; sequence YIFQTYVSVDSK.

The protein resides in the membrane. This is an uncharacterized protein from Saccharomyces cerevisiae (strain ATCC 204508 / S288c) (Baker's yeast).